The chain runs to 67 residues: ATP synthase protein 8 (67 aa).

Residues 8-24 traverse the membrane as a helical segment; the sequence is TWFITITSMTITLFIMF. Lysine 54 carries the post-translational modification N6-acetyllysine; alternate. An N6-succinyllysine; alternate modification is found at lysine 54. At lysine 57 the chain carries N6-acetyllysine.

This sequence belongs to the ATPase protein 8 family. F-type ATPases have 2 components, CF(1) - the catalytic core - and CF(0) - the membrane proton channel. Component of an ATP synthase complex composed of ATP5PB, ATP5MC1, ATP5F1E, ATP5PD, ATP5ME, ATP5PF, ATP5MF, MT-ATP6, MT-ATP8, ATP5F1A, ATP5F1B, ATP5F1D, ATP5F1C, ATP5PO, ATP5MG, ATP5MK and ATP5MJ. Interacts with PRICKLE3.

The protein resides in the mitochondrion membrane. In terms of biological role, mitochondrial membrane ATP synthase (F(1)F(0) ATP synthase or Complex V) produces ATP from ADP in the presence of a proton gradient across the membrane which is generated by electron transport complexes of the respiratory chain. F-type ATPases consist of two structural domains, F(1) - containing the extramembraneous catalytic core and F(0) - containing the membrane proton channel, linked together by a central stalk and a peripheral stalk. During catalysis, ATP synthesis in the catalytic domain of F(1) is coupled via a rotary mechanism of the central stalk subunits to proton translocation. Part of the complex F(0) domain. Minor subunit located with subunit a in the membrane. The chain is ATP synthase protein 8 (MT-ATP8) from Rhinoceros unicornis (Greater Indian rhinoceros).